Reading from the N-terminus, the 330-residue chain is Aspartate--ammonia ligase (330 aa).

Belongs to the class-II aminoacyl-tRNA synthetase family. AsnA subfamily.

It is found in the cytoplasm. The enzyme catalyses L-aspartate + NH4(+) + ATP = L-asparagine + AMP + diphosphate + H(+). Its pathway is amino-acid biosynthesis; L-asparagine biosynthesis; L-asparagine from L-aspartate (ammonia route): step 1/1. The protein is Aspartate--ammonia ligase of Klebsiella pneumoniae subsp. pneumoniae (strain ATCC 700721 / MGH 78578).